The chain runs to 157 residues: SsrA-binding protein (157 aa).

Residues 133–157 (LHDKRESEKKRDWGREKGRLLRARG) are disordered. A compositionally biased stretch (basic and acidic residues) spans 135-151 (DKRESEKKRDWGREKGR).

The protein belongs to the SmpB family.

The protein localises to the cytoplasm. In terms of biological role, required for rescue of stalled ribosomes mediated by trans-translation. Binds to transfer-messenger RNA (tmRNA), required for stable association of tmRNA with ribosomes. tmRNA and SmpB together mimic tRNA shape, replacing the anticodon stem-loop with SmpB. tmRNA is encoded by the ssrA gene; the 2 termini fold to resemble tRNA(Ala) and it encodes a 'tag peptide', a short internal open reading frame. During trans-translation Ala-aminoacylated tmRNA acts like a tRNA, entering the A-site of stalled ribosomes, displacing the stalled mRNA. The ribosome then switches to translate the ORF on the tmRNA; the nascent peptide is terminated with the 'tag peptide' encoded by the tmRNA and targeted for degradation. The ribosome is freed to recommence translation, which seems to be the essential function of trans-translation. The protein is SsrA-binding protein of Nitrobacter winogradskyi (strain ATCC 25391 / DSM 10237 / CIP 104748 / NCIMB 11846 / Nb-255).